The primary structure comprises 93 residues: DNA/RNA-binding protein Alba (93 aa).

An N6-acetyllysine modification is found at lysine 11.

It belongs to the histone-like Alba family. Acetylated. Acetylation at Lys-11 decreases DNA-binding affinity.

Its subcellular location is the cytoplasm. It localises to the chromosome. In terms of biological role, binds double-stranded DNA tightly but without sequence specificity. Involved in DNA compaction. The polypeptide is DNA/RNA-binding protein Alba (Pyrococcus furiosus (strain ATCC 43587 / DSM 3638 / JCM 8422 / Vc1)).